Here is a 211-residue protein sequence, read N- to C-terminus: Probable nicotinate-nucleotide adenylyltransferase (211 aa).

It belongs to the NadD family.

The catalysed reaction is nicotinate beta-D-ribonucleotide + ATP + H(+) = deamido-NAD(+) + diphosphate. It participates in cofactor biosynthesis; NAD(+) biosynthesis; deamido-NAD(+) from nicotinate D-ribonucleotide: step 1/1. Catalyzes the reversible adenylation of nicotinate mononucleotide (NaMN) to nicotinic acid adenine dinucleotide (NaAD). This is Probable nicotinate-nucleotide adenylyltransferase from Cellvibrio japonicus (strain Ueda107) (Pseudomonas fluorescens subsp. cellulosa).